We begin with the raw amino-acid sequence, 602 residues long: MAASSSSAASFFGVRQDDQSHLLPPNSSAAAPPPPPPHHQAPLPPLEAPPQKKKRNQPRTPNSDAEVIALSPKTLMATNRFICEVCNKGFQREQNLQLHRRGHNLPWKLKQKSTKEVKRKVYLCPEPSCVHHDPSRALGDLTGIKKHYYRKHGEKKWKCDKCSKRYAVQSDWKAHSKTCGTKEYRCDCGTLFSRRDSFITHRAFCDALAQESARHPTSLTSLPSHHFPYGQNTNNSNNNASSMILGLSHMGAPQNLDHQPGDVLRLGSGGGGGGAASRSSSDLIAANASGYFMQEQNPSFHDQQDHHHHHQQGFLAGNNNIKQSPMSFQQNLMQFSHDNHNSAPSNVFNLSFLSGNNGVTSATSNPNAAAAAAVSSGNLMISNHYDGENAVGGGGEGSTGLFPNNLMSSADRISSGSVPSLFSSSMQSPNSAPHMSATALLQKAAQMGSTSSNNNNGSNTNNNNNASSILRSFGSGIYGENESNLQDLMNSFSNPGATGNVNGVDSPFGSYGGVNKGLSADKQSMTRDFLGVGQIVKSMSGSGGFQQQQQQQQQQQQQQQHGNSRERVGSSSDSADRSSMNVNTGGGPASTSPPYGIHHASF.

Low complexity-rich tracts occupy residues 1-10 (MAASSSSAAS) and 21-30 (HLLPPNSSAA). A chloroplast-targeting transit peptide spans 1-50 (MAASSSSAASFFGVRQDDQSHLLPPNSSAAAPPPPPPHHQAPLPPLEAPP). The segment at 1–65 (MAASSSSAAS…NQPRTPNSDA (65 aa)) is disordered. Residues 31–48 (APPPPPPHHQAPLPPLEA) are compositionally biased toward pro residues. T60 carries the phosphothreonine modification. S71 is subject to Phosphoserine. 2 C2H2-type zinc fingers span residues 81 to 103 (FICE…RRGH) and 122 to 152 (YLCP…YRKH). A C2H2-type 2; degenerate zinc finger spans residues 157–180 (WKCDKCSKRYAVQSDWKAHSKTCG). Zn(2+) contacts are provided by C159, C162, H175, C179, C186, C188, H201, and C205. The CCHC-type 2; atypical zinc-finger motif lies at 184-207 (YRCDCGTLFSRRDSFITHRAFCDA). The interval 194–206 (RRDSFITHRAFCD) is SHR-binding. 2 disordered regions span residues 443 to 467 (KAAQ…NNAS) and 537 to 602 (KSMS…HASF). Composition is skewed to low complexity over residues 448–467 (GSTS…NNAS), 546–560 (QQQQ…QQQQ), and 570–579 (SSSDSADRSS).

Binds to RGA and SCL3 competitively. Highly expressed in leaf tissues.

The protein localises to the plastid. The protein resides in the chloroplast. In terms of biological role, transcription factor acting as a positive regulator of the starch synthase SS4. Controls chloroplast development and starch granule formation. Binds DNA via its zinc fingers. Recognizes and binds to SCL3 promoter sequence 5'-AGACAA-3' to promote its expression when in complex with RGA. The polypeptide is Protein indeterminate-domain 5, chloroplastic (Arabidopsis thaliana (Mouse-ear cress)).